A 340-amino-acid polypeptide reads, in one-letter code: Ketol-acid reductoisomerase (NADP(+)) (340 aa).

The KARI N-terminal Rossmann domain maps to 2 to 182 (AELYYDNQAD…GCTRAGVLRT (181 aa)). NADP(+) contacts are provided by residues 25–28 (FGSQ), Ser-51, Ser-53, and 83–86 (DIGQ). The active site involves His-108. Gly-134 serves as a coordination point for NADP(+). Residues 183–328 (TFAEETETDL…RELRRMMPFV (146 aa)) form the KARI C-terminal knotted domain. The Mg(2+) site is built by Asp-191, Glu-195, Glu-227, and Glu-231. Ser-252 provides a ligand contact to substrate.

This sequence belongs to the ketol-acid reductoisomerase family. The cofactor is Mg(2+).

It carries out the reaction (2R)-2,3-dihydroxy-3-methylbutanoate + NADP(+) = (2S)-2-acetolactate + NADPH + H(+). It catalyses the reaction (2R,3R)-2,3-dihydroxy-3-methylpentanoate + NADP(+) = (S)-2-ethyl-2-hydroxy-3-oxobutanoate + NADPH + H(+). It functions in the pathway amino-acid biosynthesis; L-isoleucine biosynthesis; L-isoleucine from 2-oxobutanoate: step 2/4. The protein operates within amino-acid biosynthesis; L-valine biosynthesis; L-valine from pyruvate: step 2/4. Functionally, involved in the biosynthesis of branched-chain amino acids (BCAA). Catalyzes an alkyl-migration followed by a ketol-acid reduction of (S)-2-acetolactate (S2AL) to yield (R)-2,3-dihydroxy-isovalerate. In the isomerase reaction, S2AL is rearranged via a Mg-dependent methyl migration to produce 3-hydroxy-3-methyl-2-ketobutyrate (HMKB). In the reductase reaction, this 2-ketoacid undergoes a metal-dependent reduction by NADPH to yield (R)-2,3-dihydroxy-isovalerate. The protein is Ketol-acid reductoisomerase (NADP(+)) of Chloroflexus aggregans (strain MD-66 / DSM 9485).